A 567-amino-acid polypeptide reads, in one-letter code: Proline--tRNA ligase (567 aa).

Belongs to the class-II aminoacyl-tRNA synthetase family. ProS type 1 subfamily. In terms of assembly, homodimer.

The protein localises to the cytoplasm. It catalyses the reaction tRNA(Pro) + L-proline + ATP = L-prolyl-tRNA(Pro) + AMP + diphosphate. Functionally, catalyzes the attachment of proline to tRNA(Pro) in a two-step reaction: proline is first activated by ATP to form Pro-AMP and then transferred to the acceptor end of tRNA(Pro). As ProRS can inadvertently accommodate and process non-cognate amino acids such as alanine and cysteine, to avoid such errors it has two additional distinct editing activities against alanine. One activity is designated as 'pretransfer' editing and involves the tRNA(Pro)-independent hydrolysis of activated Ala-AMP. The other activity is designated 'posttransfer' editing and involves deacylation of mischarged Ala-tRNA(Pro). The misacylated Cys-tRNA(Pro) is not edited by ProRS. The polypeptide is Proline--tRNA ligase (Stenotrophomonas maltophilia (strain R551-3)).